The chain runs to 125 residues: Nascent polypeptide-associated complex protein (125 aa).

Residues 9 to 76 enclose the NAC-A/B domain; it reads PRMMKQMQKM…SKNTSKTAEK (68 aa).

It belongs to the NAC-alpha family. Homodimer. Interacts with the ribosome. Binds ribosomal RNA.

In terms of biological role, contacts the emerging nascent chain on the ribosome. The chain is Nascent polypeptide-associated complex protein from Methanococcus vannielii (strain ATCC 35089 / DSM 1224 / JCM 13029 / OCM 148 / SB).